A 131-amino-acid polypeptide reads, in one-letter code: 23S rRNA-specific endonuclease VapC20 (131 aa).

Residues 2 to 125 (IFVDTSFWAA…FDGDFSAAGF (124 aa)) enclose the PINc domain. Aspartate 5 and aspartate 98 together coordinate Mg(2+).

Belongs to the PINc/VapC protein family. The cofactor is Mg(2+).

Its function is as follows. Toxic component of a type II toxin-antitoxin (TA) system. An endoribonuclease that cleaves 23S rRNA in the sarcin-ricin loop (SRL). The SRL sequence is highly conserved and is implicated in GTP hydrolysis by EF-Tu and EF-G. Acts on purified ribosomes but not on isolated RNA. Its toxic effect is neutralized by coexpression with cognate antitoxin VapB20. This Mycobacterium tuberculosis (strain CDC 1551 / Oshkosh) protein is 23S rRNA-specific endonuclease VapC20 (vapC20).